The primary structure comprises 496 residues: tRNA modification GTPase mss1, mitochondrial (496 aa).

The transit peptide at 1–19 (MRILNRVFLNTFQACFRRF) directs the protein to the mitochondrion. Positions 239–416 (GINVAILGPS…FLQALSSTFE (178 aa)) constitute a TrmE-type G domain. GTP is bound by residues 246 to 253 (GPSNAGKS), 293 to 297 (DTAGL), and 363 to 366 (NKVD).

This sequence belongs to the TRAFAC class TrmE-Era-EngA-EngB-Septin-like GTPase superfamily. TrmE GTPase family.

Its subcellular location is the mitochondrion. GTPase involved in the 5-carboxymethylaminomethyl modification (mnm(5)s(2)U34) of the wobble uridine base in mitochondrial tRNAs. The polypeptide is tRNA modification GTPase mss1, mitochondrial (mss1) (Schizosaccharomyces pombe (strain 972 / ATCC 24843) (Fission yeast)).